The chain runs to 324 residues: E3 ubiquitin-protein ligase SIAH2 (324 aa).

Residues M1–C15 show a composition bias toward polar residues. The segment at M1–G42 is disordered. S6 carries the phosphoserine modification. S16 bears the Phosphoserine; by DYRK2 mark. Positions K17–P32 are enriched in pro residues. A Phosphothreonine; by DYRK2 modification is found at T26. S28 is modified (phosphoserine; by DYRK2 and MAPK14). The segment covering P33–G42 has biased composition (low complexity). S68 bears the Phosphoserine; by DYRK2 mark. The RING-type zinc-finger motif lies at C80–R115. T119 is modified (phosphothreonine; by DYRK2). An SBD region spans residues V130–C322. An SIAH-type zinc finger spans residues A133–K193. Residues C138, C145, H157, C161, C168, C175, H187, and H192 each contribute to the Zn(2+) site.

The protein belongs to the SINA (Seven in absentia) family. In terms of assembly, homodimer. Interacts with UBE2E2. Interacts with PEG3. Interacts with VAV1, without mediating its ubiquitin-mediated degradation. Interacts with CACYBP/SIP. Probable component of some large E3 complex possibly composed of UBE2D1, SIAH2, CACYBP/SIP, SKP1, APC and TBL1X. Interacts with PEG10, which may inhibit its activity. Interacts with EGLN2 and SNCAIP. Interacts with DYRK2. Interacts with NR1D1 and NR1D2. Interacts with DCC. Interacts with AXIN1. Phosphorylated at Ser-28 by MAPK14, which mediates the degradation by the proteasome of EGLN3. Phosphorylated at Ser-28 by DYRK2; this increases the ubiquitin ligase activity and promotes degradation of EGLN3. Widely expressed at low level.

It localises to the cytoplasm. It is found in the nucleus. It carries out the reaction S-ubiquitinyl-[E2 ubiquitin-conjugating enzyme]-L-cysteine + [acceptor protein]-L-lysine = [E2 ubiquitin-conjugating enzyme]-L-cysteine + N(6)-ubiquitinyl-[acceptor protein]-L-lysine.. The protein operates within protein modification; protein ubiquitination. Its activity is regulated as follows. Inhibited by interaction with SNCAIP (isoform 2, but not isoform 1). May be inhibited by interaction with PEG10. Its function is as follows. E3 ubiquitin-protein ligase that mediates ubiquitination and subsequent proteasomal degradation of target proteins. E3 ubiquitin ligases accept ubiquitin from an E2 ubiquitin-conjugating enzyme in the form of a thioester and then directly transfers the ubiquitin to targeted substrates. Mediates E3 ubiquitin ligase activity either through direct binding to substrates or by functioning as the essential RING domain subunit of larger E3 complexes. Triggers the ubiquitin-mediated degradation of many substrates, including proteins involved in transcription regulation (GPS2, POU2AF1, PML, NCOR1), a cell surface receptor (DCC), an antiapoptotic protein (BAG1), and a protein involved in synaptic vesicle function in neurons (SYP). Mediates ubiquitination and proteasomal degradation of DYRK2 in response to hypoxia. It is thereby involved in apoptosis, tumor suppression, cell cycle, transcription and signaling processes. Has some overlapping function with SIAH1. Triggers the ubiquitin-mediated degradation of TRAF2, whereas SIAH1 does not. Promotes monoubiquitination of SNCA. Regulates cellular clock function via ubiquitination of the circadian transcriptional repressors NR1D1 and NR1D2 leading to their proteasomal degradation. Plays an important role in mediating the rhythmic degradation/clearance of NR1D1 and NR1D2 contributing to their circadian profile of protein abundance. Mediates ubiquitination and degradation of EGLN2 and EGLN3 in response to the unfolded protein response (UPR), leading to their degradation and subsequent stabilization of ATF4. Also part of the Wnt signaling pathway in which it mediates the Wnt-induced ubiquitin-mediated proteasomal degradation of AXIN1. In Homo sapiens (Human), this protein is E3 ubiquitin-protein ligase SIAH2 (SIAH2).